The following is a 2194-amino-acid chain: Genome polyprotein (2194 aa).

Gly2 is lipidated: N-myristoyl glycine; by host. Over 2 to 1504 the chain is Cytoplasmic; the sequence is GAQVSTQKTG…HVSRAFICLQ (1503 aa). The segment at 566–582 is amphipathic alpha-helix; that stretch reads LYQNDPEGALNKAVGRV. Residues His881 and Asp899 each act as for protease 2A activity in the active site. Residues Cys916 and Cys918 each coordinate Zn(2+). Cys970 (for protease 2A activity) is an active-site residue. Cys976 and His978 together coordinate Zn(2+). Residues 1110–1182 form a membrane-binding region; sequence NNNWLKKFTE…EQSAPSQSDQ (73 aa). Residues 1110-1248 form an oligomerization region; that stretch reads NNNWLKKFTE…SPGAGKSVAT (139 aa). The segment at 1131–1135 is RNA-binding; the sequence is AIKIQ. The region spanning 1214 to 1370 is the SF3 helicase domain; the sequence is EKKMSNYIQF…SMYSQNGKIN (157 aa). Residues Cys1378, Cys1390, and Cys1395 each contribute to the Zn(2+) site. The segment at 1378–1395 adopts a C4-type; degenerate zinc-finger fold; it reads CDEECCPVNFKRCCPLVC. The interval 1422–1429 is RNA-binding; the sequence is EYNHRHSV. Positions 1433-1438 are oligomerization; sequence LEALFQ. Residues 1505–1520 lie within the membrane without spanning it; it reads ALTTFVSVAGIIYIIY. Residues 1521-2194 are Cytoplasmic-facing; the sequence is KLFAGFQGAY…TLRRKWLDSF (674 aa). Tyr1530 carries the post-translational modification O-(5'-phospho-RNA)-tyrosine. The region spanning 1550-1728 is the Peptidase C3 domain; that stretch reads GPAFEFAVAM…FSAALLRHYF (179 aa). Active-site for protease 3C activity residues include His1589, Glu1620, and Cys1696. The 117-residue stretch at 1959 to 2075 folds into the RdRp catalytic domain; that stretch reads GHLIAFDYSG…SYPHPIDASL (117 aa). The Mg(2+) site is built by Asp1965 and Asp2061.

It belongs to the picornaviruses polyprotein family. As to quaternary structure, interacts with capsid protein VP1 and capsid protein VP3 to form heterotrimeric protomers. In terms of assembly, interacts with capsid protein VP0, and capsid protein VP3 to form heterotrimeric protomers. Five protomers subsequently associate to form pentamers which serve as building blocks for the capsid. Interacts with capsid protein VP2, capsid protein VP3 and capsid protein VP4 following cleavage of capsid protein VP0. Interacts with capsid protein VP1 and capsid protein VP3 in the mature capsid. As to quaternary structure, interacts with capsid protein VP0 and capsid protein VP1 to form heterotrimeric protomers. Five protomers subsequently associate to form pentamers which serve as building blocks for the capsid. Interacts with capsid protein VP4 in the mature capsid. Interacts with protein 2C; this interaction may be important for virion morphogenesis. In terms of assembly, interacts with capsid protein VP1 and capsid protein VP3. Homodimer. As to quaternary structure, homohexamer; forms a hexameric ring structure with 6-fold symmetry characteristic of AAA+ ATPases. Interacts (via N-terminus) with host RTN3 (via reticulon domain); this interaction is important for viral replication. Interacts with capsid protein VP3; this interaction may be important for virion morphogenesis. In terms of assembly, interacts with protein 3CD. Homodimer. Interacts with host GBF1. Interacts (via GOLD domain) with host ACBD3 (via GOLD domain); this interaction allows the formation of a viral protein 3A/ACBD3 heterotetramer with a 2:2 stoichiometry, which will stimulate the recruitment of host PI4KB in order to synthesize PI4P at the viral RNA replication sites. As to quaternary structure, interacts with RNA-directed RNA polymerase. In terms of assembly, interacts with protein 3AB and with RNA-directed RNA polymerase. Interacts with Viral protein genome-linked and with protein 3CD. Mg(2+) serves as cofactor. Post-translationally, specific enzymatic cleavages in vivo by the viral proteases yield processing intermediates and the mature proteins. Myristoylation is required for the formation of pentamers during virus assembly. Further assembly of 12 pentamers and a molecule of genomic RNA generates the provirion. In terms of processing, during virion maturation, immature virions are rendered infectious following cleavage of VP0 into VP4 and VP2. This maturation seems to be an autocatalytic event triggered by the presence of RNA in the capsid and it is followed by a conformational change infectious virion. Post-translationally, myristoylation is required during RNA encapsidation and formation of the mature virus particle. VPg is uridylylated by the polymerase into VPg-pUpU. This acts as a nucleotide-peptide primer for the genomic RNA replication.

It localises to the virion. The protein resides in the host cytoplasm. It is found in the host cytoplasmic vesicle membrane. Its subcellular location is the host nucleus. The catalysed reaction is a ribonucleoside 5'-triphosphate + H2O = a ribonucleoside 5'-diphosphate + phosphate + H(+). It catalyses the reaction Selective cleavage of Tyr-|-Gly bond in the picornavirus polyprotein.. It carries out the reaction RNA(n) + a ribonucleoside 5'-triphosphate = RNA(n+1) + diphosphate. The enzyme catalyses Selective cleavage of Gln-|-Gly bond in the poliovirus polyprotein. In other picornavirus reactions Glu may be substituted for Gln, and Ser or Thr for Gly.. Its activity is regulated as follows. Replication or transcription is subject to high level of random mutations by the nucleotide analog ribavirin. In terms of biological role, forms an icosahedral capsid of pseudo T=3 symmetry with capsid proteins VP2 and VP3. The capsid is 300 Angstroms in diameter, composed of 60 copies of each capsid protein and enclosing the viral positive strand RNA genome. Capsid protein VP1 mainly forms the vertices of the capsid. Capsid protein VP1 interacts with host cell receptor to provide virion attachment to target host cells. This attachment induces virion internalization. Tyrosine kinases are probably involved in the entry process. After binding to its receptor, the capsid undergoes conformational changes. Capsid protein VP1 N-terminus (that contains an amphipathic alpha-helix) and capsid protein VP4 are externalized. Together, they shape a pore in the host membrane through which viral genome is translocated to host cell cytoplasm. Its function is as follows. Forms an icosahedral capsid of pseudo T=3 symmetry with capsid proteins VP2 and VP3. The capsid is 300 Angstroms in diameter, composed of 60 copies of each capsid protein and enclosing the viral positive strand RNA genome. Functionally, lies on the inner surface of the capsid shell. After binding to the host receptor, the capsid undergoes conformational changes. Capsid protein VP4 is released, Capsid protein VP1 N-terminus is externalized, and together, they shape a pore in the host membrane through which the viral genome is translocated into the host cell cytoplasm. Component of immature procapsids, which is cleaved into capsid proteins VP4 and VP2 after maturation. Allows the capsid to remain inactive before the maturation step. In terms of biological role, cysteine protease that cleaves viral polyprotein and specific host proteins. It is responsible for the autocatalytic cleavage between the P1 and P2 regions, which is the first cleavage occurring in the polyprotein. Also cleaves the host translation initiation factor EIF4G1, in order to shut down the capped cellular mRNA translation. Inhibits the host nucleus-cytoplasm protein and RNA trafficking by cleaving host members of the nuclear pores. Counteracts stress granule formation probably by antagonizing its assembly or promoting its dissassembly. Its function is as follows. Plays an essential role in the virus replication cycle by acting as a viroporin. Creates a pore in the host endoplasmic reticulum and as a consequence releases Ca2+ in the cytoplasm of infected cell. In turn, high levels of cytoplasmic calcium may trigger membrane trafficking and transport of viral ER-associated proteins to viroplasms, sites of viral genome replication. Functionally, induces and associates with structural rearrangements of intracellular membranes. Displays RNA-binding, nucleotide binding and NTPase activities. May play a role in virion morphogenesis and viral RNA encapsidation by interacting with the capsid protein VP3. Localizes the viral replication complex to the surface of membranous vesicles. Together with protein 3CD binds the Cis-Active RNA Element (CRE) which is involved in RNA synthesis initiation. Acts as a cofactor to stimulate the activity of 3D polymerase, maybe through a nucleid acid chaperone activity. In terms of biological role, localizes the viral replication complex to the surface of membranous vesicles. It inhibits host cell endoplasmic reticulum-to-Golgi apparatus transport and causes the disassembly of the Golgi complex, possibly through GBF1 interaction. This would result in depletion of MHC, trail receptors and IFN receptors at the host cell surface. Plays an essential role in viral RNA replication by recruiting ACBD3 and PI4KB at the viral replication sites, thereby allowing the formation of the rearranged membranous structures where viral replication takes place. Its function is as follows. Acts as a primer for viral RNA replication and remains covalently bound to viral genomic RNA. VPg is uridylylated prior to priming replication into VPg-pUpU. The oriI viral genomic sequence may act as a template for this. The VPg-pUpU is then used as primer on the genomic RNA poly(A) by the RNA-dependent RNA polymerase to replicate the viral genome. During genome replication, the VPg-RNA linkage is removed by the host TDP2, thereby accelerating replication. During the late stage of the replication cycle, host TDP2 is excluded from sites of viral RNA synthesis and encapsidation, allowing for the generation of progeny virions. Functionally, involved in the viral replication complex and viral polypeptide maturation. It exhibits protease activity with a specificity and catalytic efficiency that is different from protease 3C. Protein 3CD lacks polymerase activity. Protein 3CD binds to the 5'UTR of the viral genome. Replicates the viral genomic RNA on the surface of intracellular membranes. May form linear arrays of subunits that propagate along a strong head-to-tail interaction called interface-I. Covalently attaches UMP to a tyrosine of VPg, which is used to prime RNA synthesis. The positive stranded RNA genome is first replicated at virus induced membranous vesicles, creating a dsRNA genomic replication form. This dsRNA is then used as template to synthesize positive stranded RNA genomes. ss(+)RNA genomes are either translated, replicated or encapsidated. In terms of biological role, major viral protease that mediates proteolytic processing of the polyprotein. Cleaves host EIF5B, contributing to host translation shutoff. Also cleaves host PABPC1, contributing to host translation shutoff. Cleaves host NLRP1, triggers host N-glycine-mediated degradation of the autoinhibitory NLRP1 N-terminal fragment. In Homo sapiens (Human), this protein is Genome polyprotein.